We begin with the raw amino-acid sequence, 305 residues long: Mitogen-activated protein kinase kinase 10 (305 aa).

Ser-34 carries the phosphoserine modification. The region spanning 48-302 (LEKLSVLGQG…VEELLRHSFV (255 aa)) is the Protein kinase domain. Residues 54–62 (LGQGSGGTV) and Lys-77 contribute to the ATP site. Catalysis depends on Asp-165, which acts as the Proton acceptor. A Phosphothreonine modification is found at Thr-200.

The protein belongs to the protein kinase superfamily. STE Ser/Thr protein kinase family. MAP kinase kinase subfamily. In terms of assembly, interacts with P.syringae type III effector HopF2.

It catalyses the reaction L-seryl-[protein] + ATP = O-phospho-L-seryl-[protein] + ADP + H(+). It carries out the reaction L-threonyl-[protein] + ATP = O-phospho-L-threonyl-[protein] + ADP + H(+). The catalysed reaction is L-tyrosyl-[protein] + ATP = O-phospho-L-tyrosyl-[protein] + ADP + H(+). The polypeptide is Mitogen-activated protein kinase kinase 10 (MKK10) (Arabidopsis thaliana (Mouse-ear cress)).